Reading from the N-terminus, the 736-residue chain is Prolyl 3-hydroxylase 1 (736 aa).

An N-terminal signal peptide occupies residues 1 to 22 (MAVRALKLLTTLLAVVAAASQA). 4 TPR repeats span residues 35–68 (PDLLFAEGTAAYARGDWPGVVLSMERALRSRAAL), 143–176 (RSPYNYLQVAYFKINKLEKAVAAAHTFFVGNPEH), 205–238 (HMQEFRLGVRLYSEEQPQEAVPHLEAALQEYFVA), and 301–334 (PSHYNYLQFAYYNIGNYTQAVECAKTYLLFFPND). N316 carries an N-linked (GlcNAc...) asparagine glycan. Residues 401 to 439 (KRLQEKQKSERETAVRISQEIGNLMKEIETLVEEKTKES) are a coiled coil. 2 N-linked (GlcNAc...) asparagine glycosylation sites follow: N467 and N540. The Fe2OG dioxygenase domain occupies 564–678 (SHLVCRTAIE…RCAIALWFTL (115 aa)). Fe cation contacts are provided by H587, D589, and H659. R669 is an active-site residue. The segment at 699–736 (SPEEMDLSQEQPLDAQQGPPEPAQESLSGSESKPKDEL) is disordered. The short motif at 733-736 (KDEL) is the Prevents secretion from ER element.

This sequence belongs to the leprecan family. Requires Fe cation as cofactor. L-ascorbate serves as cofactor. Post-translationally, O-glycosylated; chondroitin sulfate.

It localises to the endoplasmic reticulum. Its subcellular location is the secreted. It is found in the extracellular space. The protein resides in the extracellular matrix. It carries out the reaction L-prolyl-[collagen] + 2-oxoglutarate + O2 = trans-3-hydroxy-L-prolyl-[collagen] + succinate + CO2. Functionally, basement membrane-associated chondroitin sulfate proteoglycan (CSPG). Has prolyl 3-hydroxylase activity catalyzing the post-translational formation of 3-hydroxyproline in -Xaa-Pro-Gly- sequences in collagens, especially types IV and V. May be involved in the secretory pathway of cells. Has growth suppressive activity in fibroblasts. The protein is Prolyl 3-hydroxylase 1 of Homo sapiens (Human).